A 1125-amino-acid chain; its full sequence is Exportin-6 (1125 aa).

Residue alanine 2 is modified to N-acetylalanine. In terms of domain architecture, Importin N-terminal spans isoleucine 31–alanine 97. Serine 199 bears the Phosphoserine mark. Phosphothreonine occurs at positions 201 and 204. Serine 208 and serine 224 each carry phosphoserine.

This sequence belongs to the exportin family. In terms of assembly, found in a complex with XPO6, Ran, ACTB and PFN1. Interacts with ACTB. Interacts with ACTB in a RanGTP-dependent manner.

The protein resides in the nucleus. Its subcellular location is the cytoplasm. Mediates the nuclear export of actin and profilin-actin complexes in somatic cells. In Homo sapiens (Human), this protein is Exportin-6 (XPO6).